Consider the following 335-residue polypeptide: Aspartate--ammonia ligase (335 aa).

The protein belongs to the class-II aminoacyl-tRNA synthetase family. AsnA subfamily.

The protein resides in the cytoplasm. It catalyses the reaction L-aspartate + NH4(+) + ATP = L-asparagine + AMP + diphosphate + H(+). It functions in the pathway amino-acid biosynthesis; L-asparagine biosynthesis; L-asparagine from L-aspartate (ammonia route): step 1/1. The sequence is that of Aspartate--ammonia ligase from Levilactobacillus brevis (strain ATCC 367 / BCRC 12310 / CIP 105137 / JCM 1170 / LMG 11437 / NCIMB 947 / NCTC 947) (Lactobacillus brevis).